Consider the following 483-residue polypeptide: Isocitrate dehydrogenase [NADP] (483 aa).

T74 serves as a coordination point for NADP(+). Residues S83, N85, R89, R99, and R121 each coordinate D-threo-isocitrate. D232 serves as a coordination point for Mg(2+). NADP(+) contacts are provided by residues 264–270 and N277; that span reads HGSAPDI.

This sequence belongs to the isocitrate and isopropylmalate dehydrogenases family. In terms of assembly, homodimer. Mg(2+) is required as a cofactor. Mn(2+) serves as cofactor.

It carries out the reaction D-threo-isocitrate + NADP(+) = 2-oxoglutarate + CO2 + NADPH. Functionally, catalyzes the oxidative decarboxylation of isocitrate to 2-oxoglutarate and carbon dioxide with the concomitant reduction of NADP(+). This chain is Isocitrate dehydrogenase [NADP] (icd), found in Rickettsia typhi (strain ATCC VR-144 / Wilmington).